The following is a 79-amino-acid chain: DNA-directed RNA polymerase subunit omega (79 aa).

This sequence belongs to the RNA polymerase subunit omega family. In terms of assembly, the RNAP catalytic core consists of 2 alpha, 1 beta, 1 beta' and 1 omega subunit. When a sigma factor is associated with the core the holoenzyme is formed, which can initiate transcription.

It catalyses the reaction RNA(n) + a ribonucleoside 5'-triphosphate = RNA(n+1) + diphosphate. Functionally, promotes RNA polymerase assembly. Latches the N- and C-terminal regions of the beta' subunit thereby facilitating its interaction with the beta and alpha subunits. The protein is DNA-directed RNA polymerase subunit omega of Thermotoga neapolitana (strain ATCC 49049 / DSM 4359 / NBRC 107923 / NS-E).